Reading from the N-terminus, the 490-residue chain is Ketol-acid reductoisomerase (NADP(+)) (490 aa).

The KARI N-terminal Rossmann domain maps to 17–208; the sequence is LAQCEFMNAD…GGHRAGVLKS (192 aa). Residues 45-48, R68, R76, S78, and 108-110 each bind NADP(+); these read CGAQ and DKQ. Residue H132 is part of the active site. G158 is an NADP(+) binding site. KARI C-terminal knotted domains lie at 209-353 and 355-486; these read SFIA…AEQE and FDNG…MSAM. Mg(2+) is bound by residues D217, E221, E389, and E393. S414 lines the substrate pocket.

It belongs to the ketol-acid reductoisomerase family. The cofactor is Mg(2+).

It catalyses the reaction (2R)-2,3-dihydroxy-3-methylbutanoate + NADP(+) = (2S)-2-acetolactate + NADPH + H(+). The catalysed reaction is (2R,3R)-2,3-dihydroxy-3-methylpentanoate + NADP(+) = (S)-2-ethyl-2-hydroxy-3-oxobutanoate + NADPH + H(+). Its pathway is amino-acid biosynthesis; L-isoleucine biosynthesis; L-isoleucine from 2-oxobutanoate: step 2/4. It participates in amino-acid biosynthesis; L-valine biosynthesis; L-valine from pyruvate: step 2/4. Involved in the biosynthesis of branched-chain amino acids (BCAA). Catalyzes an alkyl-migration followed by a ketol-acid reduction of (S)-2-acetolactate (S2AL) to yield (R)-2,3-dihydroxy-isovalerate. In the isomerase reaction, S2AL is rearranged via a Mg-dependent methyl migration to produce 3-hydroxy-3-methyl-2-ketobutyrate (HMKB). In the reductase reaction, this 2-ketoacid undergoes a metal-dependent reduction by NADPH to yield (R)-2,3-dihydroxy-isovalerate. This chain is Ketol-acid reductoisomerase (NADP(+)), found in Pseudoalteromonas translucida (strain TAC 125).